Consider the following 549-residue polypeptide: Undecaprenyl phosphate-alpha-4-amino-4-deoxy-L-arabinose arabinosyl transferase (549 aa).

12 helical membrane-spanning segments follow: residues 9 to 29 (LLLI…GLWI), 80 to 100 (LFGV…LAYL), 112 to 132 (SLAC…SGYA), 136 to 156 (PQFT…LDAG), 176 to 196 (FLTK…PYML), 204 to 224 (LLGY…PWAL), 256 to 276 (PWWF…GLLP), 288 to 308 (QPPV…FSLS), 312 to 332 (LPTY…HALV), 346 to 366 (NGLL…YLQL), 376 to 396 (FELF…LAQW), and 402 to 422 (AWAA…AAMP).

This sequence belongs to the glycosyltransferase 83 family.

It localises to the cell inner membrane. It catalyses the reaction 4-amino-4-deoxy-alpha-L-arabinopyranosyl di-trans,octa-cis-undecaprenyl phosphate + lipid IVA = lipid IIA + di-trans,octa-cis-undecaprenyl phosphate.. Its pathway is lipopolysaccharide metabolism; 4-amino-4-deoxy-beta-L-arabinose-lipid A biosynthesis. Catalyzes the transfer of the L-Ara4N moiety of the glycolipid undecaprenyl phosphate-alpha-L-Ara4N to lipid A. The modified arabinose is attached to lipid A and is required for resistance to polymyxin and cationic antimicrobial peptides. This is Undecaprenyl phosphate-alpha-4-amino-4-deoxy-L-arabinose arabinosyl transferase from Pseudomonas paraeruginosa (strain DSM 24068 / PA7) (Pseudomonas aeruginosa (strain PA7)).